We begin with the raw amino-acid sequence, 89 residues long: ATP synthase subunit c, sodium ion specific (89 aa).

Helical transmembrane passes span 9-29 (VVLA…IGPG) and 68-88 (GIYS…VGLL).

It belongs to the ATPase C chain family. F-type ATPases have 2 components, F(1) - the catalytic core - and F(0) - the membrane sodium channel. F(1) has five subunits: alpha(3), beta(3), gamma(1), delta(1), epsilon(1). F(0) has three main subunits: a(1), b(2) and c(10-14). The alpha and beta chains form an alternating ring which encloses part of the gamma chain. F(1) is attached to F(0) by a central stalk formed by the gamma and epsilon chains, while a peripheral stalk is formed by the delta and b chains.

The protein resides in the cell membrane. In terms of biological role, f(1)F(0) ATP synthase produces ATP from ADP in the presence of a proton or sodium gradient. F-type ATPases consist of two structural domains, F(1) containing the extramembraneous catalytic core and F(0) containing the membrane sodium channel, linked together by a central stalk and a peripheral stalk. During catalysis, ATP synthesis in the catalytic domain of F(1) is coupled via a rotary mechanism of the central stalk subunits to sodium translocation. Its function is as follows. Key component of the F(0) channel; it plays a direct role in translocation across the membrane. A homomeric c-ring of between 10-14 subunits forms the central stalk rotor element with the F(1) delta and epsilon subunits. The polypeptide is ATP synthase subunit c, sodium ion specific (atpE) (Propionigenium modestum).